The primary structure comprises 264 residues: Thymidylate synthase (264 aa).

Arg-21 contacts dUMP. His-51 is a binding site for (6R)-5,10-methylene-5,6,7,8-tetrahydrofolate. DUMP is bound at residue 126–127 (RR). The Nucleophile role is filled by Cys-146. DUMP-binding positions include 166 to 169 (RSAD), Asn-177, and 207 to 209 (HLY). A (6R)-5,10-methylene-5,6,7,8-tetrahydrofolate-binding site is contributed by Asp-169. Ala-263 lines the (6R)-5,10-methylene-5,6,7,8-tetrahydrofolate pocket.

This sequence belongs to the thymidylate synthase family. Bacterial-type ThyA subfamily. As to quaternary structure, homodimer.

It localises to the cytoplasm. It carries out the reaction dUMP + (6R)-5,10-methylene-5,6,7,8-tetrahydrofolate = 7,8-dihydrofolate + dTMP. It functions in the pathway pyrimidine metabolism; dTTP biosynthesis. In terms of biological role, catalyzes the reductive methylation of 2'-deoxyuridine-5'-monophosphate (dUMP) to 2'-deoxythymidine-5'-monophosphate (dTMP) while utilizing 5,10-methylenetetrahydrofolate (mTHF) as the methyl donor and reductant in the reaction, yielding dihydrofolate (DHF) as a by-product. This enzymatic reaction provides an intracellular de novo source of dTMP, an essential precursor for DNA biosynthesis. The polypeptide is Thymidylate synthase (Legionella pneumophila (strain Lens)).